The following is a 164-amino-acid chain: Kunitz-type serine protease inhibitor BbKI (164 aa).

The protein belongs to the protease inhibitor I3 (leguminous Kunitz-type inhibitor) family. In terms of assembly, monomer.

It localises to the secreted. Its function is as follows. Inhibits bovine trypsin, human plasma kallikrein and plasmin and weakly bovine chymotrypsin. This is Kunitz-type serine protease inhibitor BbKI from Bauhinia bauhinioides (Perlebia bauhinoides).